Here is a 165-residue protein sequence, read N- to C-terminus: 6,7-dimethyl-8-ribityllumazine synthase (165 aa).

5-amino-6-(D-ribitylamino)uracil contacts are provided by residues tryptophan 26, 57–59 (SVE), and 79–81 (VVV). 84–85 (AT) contacts (2S)-2-hydroxy-3-oxobutyl phosphate. Histidine 87 (proton donor) is an active-site residue. 5-amino-6-(D-ribitylamino)uracil is bound at residue histidine 112. Arginine 126 contacts (2S)-2-hydroxy-3-oxobutyl phosphate.

Belongs to the DMRL synthase family.

It carries out the reaction (2S)-2-hydroxy-3-oxobutyl phosphate + 5-amino-6-(D-ribitylamino)uracil = 6,7-dimethyl-8-(1-D-ribityl)lumazine + phosphate + 2 H2O + H(+). The protein operates within cofactor biosynthesis; riboflavin biosynthesis; riboflavin from 2-hydroxy-3-oxobutyl phosphate and 5-amino-6-(D-ribitylamino)uracil: step 1/2. Its function is as follows. Catalyzes the formation of 6,7-dimethyl-8-ribityllumazine by condensation of 5-amino-6-(D-ribitylamino)uracil with 3,4-dihydroxy-2-butanone 4-phosphate. This is the penultimate step in the biosynthesis of riboflavin. This chain is 6,7-dimethyl-8-ribityllumazine synthase, found in Salinispora arenicola (strain CNS-205).